The primary structure comprises 101 residues: Urease subunit beta (101 aa).

It belongs to the urease beta subunit family. In terms of assembly, heterotrimer of UreA (gamma), UreB (beta) and UreC (alpha) subunits. Three heterotrimers associate to form the active enzyme.

The protein resides in the cytoplasm. It catalyses the reaction urea + 2 H2O + H(+) = hydrogencarbonate + 2 NH4(+). The protein operates within nitrogen metabolism; urea degradation; CO(2) and NH(3) from urea (urease route): step 1/1. The protein is Urease subunit beta of Albidiferax ferrireducens (strain ATCC BAA-621 / DSM 15236 / T118) (Rhodoferax ferrireducens).